The primary structure comprises 357 residues: Alanine racemase (357 aa).

Lys-33 functions as the Proton acceptor; specific for D-alanine in the catalytic mechanism. Residue Lys-33 is modified to N6-(pyridoxal phosphate)lysine. Arg-129 is a substrate binding site. The Proton acceptor; specific for L-alanine role is filled by Tyr-253. Met-301 provides a ligand contact to substrate.

This sequence belongs to the alanine racemase family. Pyridoxal 5'-phosphate is required as a cofactor.

It carries out the reaction L-alanine = D-alanine. It participates in amino-acid biosynthesis; D-alanine biosynthesis; D-alanine from L-alanine: step 1/1. Functionally, catalyzes the interconversion of L-alanine and D-alanine. May also act on other amino acids. The chain is Alanine racemase (alr) from Pseudomonas fluorescens (strain ATCC BAA-477 / NRRL B-23932 / Pf-5).